The primary structure comprises 158 residues: Ribosome maturation factor RimP (158 aa).

Belongs to the RimP family.

The protein resides in the cytoplasm. Functionally, required for maturation of 30S ribosomal subunits. The polypeptide is Ribosome maturation factor RimP (Lactobacillus delbrueckii subsp. bulgaricus (strain ATCC 11842 / DSM 20081 / BCRC 10696 / JCM 1002 / NBRC 13953 / NCIMB 11778 / NCTC 12712 / WDCM 00102 / Lb 14)).